Reading from the N-terminus, the 223-residue chain is Sigma non-opioid intracellular receptor 1 (223 aa).

Over 1–9 (MQWAVGRRW) the chain is Lumenal. A targeting to endoplasmic reticulum-associated lipid droplets region spans residues 2–8 (QWAVGRR). Residues 10-30 (AWAALLLAVAAVLTQVVWLWL) traverse the membrane as a helical segment. Residues 31–223 (GTQSFVFQRE…LTTYLFGQDP (193 aa)) lie on the Cytoplasmic side of the membrane. The interval 99–106 (SLSEYVLL) is important for ligand-binding. Positions 177-223 (VIPSTLAFALADTVFSTQDFLTLFYTLRSYARGLRLELTTYLFGQDP) are C-terminal hydrophobic region.

This sequence belongs to the ERG2 family. Homotrimer. Forms a ternary complex with ANK2 and ITPR3. The complex is disrupted by agonists. Interacts with KCNA4. Interacts with KCNA2; cocaine consumption leads to increased interaction. Interacts with RNF112 in an oxidative stress-regulated manner. In terms of tissue distribution, widely expressed with higher expression in liver, colon, prostate, placenta, small intestine, heart and pancreas. Expressed in the retina by retinal pigment epithelial cells. Expressed in alpha-motor neurons.

Its subcellular location is the nucleus inner membrane. The protein resides in the nucleus outer membrane. It localises to the nucleus envelope. It is found in the cytoplasmic vesicle. The protein localises to the endoplasmic reticulum membrane. Its subcellular location is the membrane. The protein resides in the lipid droplet. It localises to the cell junction. It is found in the cell membrane. The protein localises to the cell projection. Its subcellular location is the growth cone. The protein resides in the postsynaptic density membrane. In terms of biological role, functions in lipid transport from the endoplasmic reticulum and is involved in a wide array of cellular functions probably through regulation of the biogenesis of lipid microdomains at the plasma membrane. Involved in the regulation of different receptors it plays a role in BDNF signaling and EGF signaling. Also regulates ion channels like the potassium channel and could modulate neurotransmitter release. Plays a role in calcium signaling through modulation together with ANK2 of the ITP3R-dependent calcium efflux at the endoplasmic reticulum. Plays a role in several other cell functions including proliferation, survival and death. Originally identified for its ability to bind various psychoactive drugs it is involved in learning processes, memory and mood alteration. Necessary for proper mitochondrial axonal transport in motor neurons, in particular the retrograde movement of mitochondria. Plays a role in protecting cells against oxidative stress-induced cell death via its interaction with RNF112. This is Sigma non-opioid intracellular receptor 1 (SIGMAR1) from Homo sapiens (Human).